The chain runs to 271 residues: Eukaryotic translation initiation factor 2 subunit beta (271 aa).

The C4-type zinc finger occupies 223–247 (CLGCQSPDTILSKENRLFFLRCEKC).

This sequence belongs to the eIF-2-beta/eIF-5 family. Eukaryotic translation initiation factor 2 eIF2 is a heterotrimeric complex composed of an alpha, a beta and a gamma subunit.

The protein localises to the cytoplasm. It is found in the cytosol. In terms of biological role, component of the eIF2 complex that functions in the early steps of protein synthesis by forming a ternary complex with GTP and initiator tRNA. This complex binds to a 40S ribosomal subunit, followed by mRNA binding to form a 43S pre-initiation complex (43S PIC). Junction of the 60S ribosomal subunit to form the 80S initiation complex is preceded by hydrolysis of the GTP bound to eIF2 and release of an eIF2-GDP binary complex. In order for eIF2 to recycle and catalyze another round of initiation, the GDP bound to eIF2 must exchange with GTP by way of a reaction catalyzed by eIF2B. This Malus domestica (Apple) protein is Eukaryotic translation initiation factor 2 subunit beta.